Consider the following 408-residue polypeptide: LL-diaminopimelate aminotransferase (408 aa).

2 residues coordinate substrate: Y15 and G42. Residues Y72, 108–109 (SK), Y132, N187, Y218, and 246–248 (SFS) contribute to the pyridoxal 5'-phosphate site. K109, Y132, and N187 together coordinate substrate. Residue K249 is modified to N6-(pyridoxal phosphate)lysine. The pyridoxal 5'-phosphate site is built by R257 and N292. Positions 292 and 388 each coordinate substrate.

It belongs to the class-I pyridoxal-phosphate-dependent aminotransferase family. LL-diaminopimelate aminotransferase subfamily. In terms of assembly, homodimer. It depends on pyridoxal 5'-phosphate as a cofactor.

It carries out the reaction (2S,6S)-2,6-diaminopimelate + 2-oxoglutarate = (S)-2,3,4,5-tetrahydrodipicolinate + L-glutamate + H2O + H(+). It participates in amino-acid biosynthesis; L-lysine biosynthesis via DAP pathway; LL-2,6-diaminopimelate from (S)-tetrahydrodipicolinate (aminotransferase route): step 1/1. Functionally, involved in the synthesis of meso-diaminopimelate (m-DAP or DL-DAP), required for both lysine and peptidoglycan biosynthesis. Catalyzes the direct conversion of tetrahydrodipicolinate to LL-diaminopimelate. This is LL-diaminopimelate aminotransferase from Synechococcus sp. (strain CC9311).